The sequence spans 301 residues: MGAQLSTLGHVVLSPVWFLYSLLMKLFRCSTPAITLESPDIKYSLRLIDREIISHDTRRFRFALPSPQHILGLPVGQHIYLSARIDGNLVIRPYTPVSSDDDKGFVDLVIKVYFKDTHPKFPAGGKMSQYLESMQIGDTIEFRGPNGLLVYQGKGKFAIRPDKKSNPVIKTVKSVGMIAGGTGITPMLQVIRAIMKDPDDHTVCHLLFANQTEKDILLRPELEELRNEHSARFKLWYTLDRAPEAWDYSQGFVNEEMIRDHLPPPEEEPLVLMCGPPPMIQYACLPNLDRVGHPKERCFAF.

A lipid anchor (N-myristoyl glycine) is attached at G2. The 113-residue stretch at 40-152 (DIKYSLRLID…RGPNGLLVYQ (113 aa)) folds into the FAD-binding FR-type domain. N6-acetyllysine is present on K42. A Phosphotyrosine modification is found at Y43. R92, P93, Y94, V109, K111, and F114 together coordinate FAD. K120 carries the post-translational modification N6-acetyllysine. K126, M127, S128, and T185 together coordinate FAD.

Belongs to the flavoprotein pyridine nucleotide cytochrome reductase family. Component of a complex composed of cytochrome b5, NADH-cytochrome b5 reductase (CYB5R3) and MTARC2. Interacts with MTLN; the interaction is required to maintain cellular lipid composition and leads to stimulation of mitochondrial respiratory complex I activity. FAD serves as cofactor.

It localises to the endoplasmic reticulum membrane. Its subcellular location is the mitochondrion outer membrane. The enzyme catalyses 2 Fe(III)-[cytochrome b5] + NADH = 2 Fe(II)-[cytochrome b5] + NAD(+) + H(+). Its function is as follows. Catalyzes the reduction of two molecules of cytochrome b5 using NADH as the electron donor. The protein is NADH-cytochrome b5 reductase 3 (CYB5R3) of Macaca fascicularis (Crab-eating macaque).